We begin with the raw amino-acid sequence, 317 residues long: Inositol oxygenase 4 (317 aa).

Substrate is bound by residues Arg58 and 115–117 (DES). Fe cation is bound by residues His128, His153, and Asp154. Substrate-binding positions include Lys157 and 174–175 (GD). Fe cation is bound by residues His226, His252, and Asp285. A substrate-binding site is contributed by 252–253 (HS).

This sequence belongs to the myo-inositol oxygenase family. Fe cation serves as cofactor. As to expression, expressed in flowers, leaves, siliques, and to a lesser extent in roots.

Its subcellular location is the cytoplasm. It carries out the reaction myo-inositol + O2 = D-glucuronate + H2O + H(+). The protein operates within polyol metabolism; myo-inositol degradation into D-glucuronate; D-glucuronate from myo-inositol: step 1/1. Its function is as follows. Catalyzes the oxygenative cleavage of myo-inositol to D-glucuronate. Involved in the biosynthesis of UDP-glucuronic acid (UDP-GlcA), providing nucleotide sugars for cell-wall polymers. May be also involved in plant ascorbate biosynthesis. This is Inositol oxygenase 4 (MIOX4) from Arabidopsis thaliana (Mouse-ear cress).